A 161-amino-acid polypeptide reads, in one-letter code: Crossover junction endodeoxyribonuclease RuvC (161 aa).

Active-site residues include Asp7, Glu67, and Asp140. The Mg(2+) site is built by Asp7, Glu67, and Asp140.

It belongs to the RuvC family. In terms of assembly, homodimer which binds Holliday junction (HJ) DNA. The HJ becomes 2-fold symmetrical on binding to RuvC with unstacked arms; it has a different conformation from HJ DNA in complex with RuvA. In the full resolvosome a probable DNA-RuvA(4)-RuvB(12)-RuvC(2) complex forms which resolves the HJ. Mg(2+) serves as cofactor.

The protein localises to the cytoplasm. It catalyses the reaction Endonucleolytic cleavage at a junction such as a reciprocal single-stranded crossover between two homologous DNA duplexes (Holliday junction).. In terms of biological role, the RuvA-RuvB-RuvC complex processes Holliday junction (HJ) DNA during genetic recombination and DNA repair. Endonuclease that resolves HJ intermediates. Cleaves cruciform DNA by making single-stranded nicks across the HJ at symmetrical positions within the homologous arms, yielding a 5'-phosphate and a 3'-hydroxyl group; requires a central core of homology in the junction. The consensus cleavage sequence is 5'-(A/T)TT(C/G)-3'. Cleavage occurs on the 3'-side of the TT dinucleotide at the point of strand exchange. HJ branch migration catalyzed by RuvA-RuvB allows RuvC to scan DNA until it finds its consensus sequence, where it cleaves and resolves the cruciform DNA. This Natranaerobius thermophilus (strain ATCC BAA-1301 / DSM 18059 / JW/NM-WN-LF) protein is Crossover junction endodeoxyribonuclease RuvC.